A 1719-amino-acid chain; its full sequence is Sodium channel protein type 4 subunit alpha B (1719 aa).

The Cytoplasmic portion of the chain corresponds to methionine 1 to serine 126. Residues glutamine 28–alanine 50 are disordered. One copy of the I repeat lies at leucine 108–asparagine 431. The helical transmembrane segment at leucine 127–leucine 145 threads the bilayer. Residues serine 146 to serine 152 are Extracellular-facing. Residues lysine 153–serine 173 traverse the membrane as a helical segment. The Cytoplasmic portion of the chain corresponds to arginine 174 to proline 187. The helical transmembrane segment at tryptophan 188–valine 205 threads the bilayer. Residues aspartate 206 to serine 211 are Extracellular-facing. Residue asparagine 209 is glycosylated (N-linked (GlcNAc...) asparagine). A helical membrane pass occupies residues valine 212–isoleucine 228. Residues proline 229 to aspartate 247 are Cytoplasmic-facing. Residues alanine 248 to phenylalanine 267 traverse the membrane as a helical segment. Residues methionine 268 to serine 368 are Extracellular-facing. A disulfide bridge links cysteine 275 with cysteine 337. Asparagine 285 and asparagine 339 each carry an N-linked (GlcNAc...) asparagine glycan. An intrachain disulfide couples cysteine 346 to cysteine 352. Positions phenylalanine 369–leucine 393 form an intramembrane region, pore-forming. Residues arginine 394–tyrosine 400 are Extracellular-facing. The chain crosses the membrane as a helical span at residues methionine 401 to alanine 421. Residues valine 422–proline 513 are Cytoplasmic-facing. The stretch at cysteine 495–alanine 766 is one II repeat. The chain crosses the membrane as a helical span at residues phenylalanine 514–methionine 532. Residues glutamate 533 to glutamate 543 lie on the Extracellular side of the membrane. Residues leucine 544 to lysine 563 form a helical membrane-spanning segment. Residues isoleucine 564–tryptophan 577 lie on the Cytoplasmic side of the membrane. Residues asparagine 578–valine 597 traverse the membrane as a helical segment. Residues glutamine 598–glycine 599 lie on the Extracellular side of the membrane. Residues leucine 600–serine 617 form a helical membrane-spanning segment. Over tryptophan 618–glycine 633 the chain is Cytoplasmic. Residues alanine 634–valine 652 form a helical membrane-spanning segment. The Extracellular segment spans residues glycine 653–aspartate 681. Cysteine 666 and cysteine 672 are disulfide-bonded. Positions phenylalanine 682 to tryptophan 702 form an intramembrane region, pore-forming. Over aspartate 703–cysteine 713 the chain is Extracellular. A disulfide bond links cysteine 704 and cysteine 713. A helical membrane pass occupies residues leucine 714–phenylalanine 732. The Cytoplasmic segment spans residues leucine 733–tyrosine 919. Residues serine 834 to lysine 845 are compositionally biased toward acidic residues. Residues serine 834–glutamate 862 form a disordered region. The stretch at arginine 900 to leucine 1215 is one III repeat. The chain crosses the membrane as a helical span at residues phenylalanine 920–phenylalanine 937. Residues glutamate 938–serine 950 are Extracellular-facing. The helical transmembrane segment at isoleucine 951–leucine 969 threads the bilayer. Over lysine 970–alanine 983 the chain is Cytoplasmic. The chain crosses the membrane as a helical span at residues tryptophan 984–asparagine 1002. The Extracellular portion of the chain corresponds to isoleucine 1003–glycine 1010. The chain crosses the membrane as a helical span at residues alanine 1011 to arginine 1029. Residues phenylalanine 1030–serine 1046 are Cytoplasmic-facing. A helical membrane pass occupies residues isoleucine 1047–valine 1066. At asparagine 1067–valine 1119 the chain is on the extracellular side. An intrachain disulfide couples cysteine 1076 to cysteine 1096. N-linked (GlcNAc...) asparagine glycans are attached at residues asparagine 1078 and asparagine 1092. Positions glycine 1120–alanine 1141 form an intramembrane region, pore-forming. The Extracellular portion of the chain corresponds to alanine 1142–leucine 1158. Residues tyrosine 1159 to isoleucine 1180 traverse the membrane as a helical segment. Residues glycine 1181–isoleucine 1243 are Cytoplasmic-facing. The segment at isoleucine 1199–methionine 1201 is important for rapid channel inactivation. Residues valine 1224 to glutamine 1521 form an IV repeat. The chain crosses the membrane as a helical span at residues phenylalanine 1244–valine 1261. The Extracellular segment spans residues glutamate 1262–glutamate 1272. A helical membrane pass occupies residues valine 1273–leucine 1291. Over lysine 1292–isoleucine 1303 the chain is Cytoplasmic. The chain crosses the membrane as a helical span at residues glycine 1304–leucine 1321. Topologically, residues leucine 1322 to threonine 1334 are extracellular. Residues leucine 1335–isoleucine 1351 form a helical membrane-spanning segment. The Cytoplasmic portion of the chain corresponds to arginine 1352 to alanine 1370. Residues leucine 1371–phenylalanine 1388 traverse the membrane as a helical segment. The Extracellular portion of the chain corresponds to glycine 1389–threonine 1410. The segment at residues phenylalanine 1411 to proline 1433 is an intramembrane region (pore-forming). Residues isoleucine 1434–glycine 1462 lie on the Extracellular side of the membrane. The cysteines at positions 1441 and 1456 are disulfide-linked. Residues isoleucine 1463–isoleucine 1485 traverse the membrane as a helical segment. At leucine 1486 to valine 1719 the chain is on the cytoplasmic side. Residues glutamate 1615 to glutamate 1644 form the IQ domain.

This sequence belongs to the sodium channel (TC 1.A.1.10) family. Nav1.4/SCN4A subfamily. Voltage-gated sodium (Nav) channels consist of an ion-conducting alpha subunit which is functional on its own associated with regulatory beta subunits.

It localises to the cell membrane. The catalysed reaction is Na(+)(in) = Na(+)(out). In terms of biological role, pore-forming subunit of a voltage-gated sodium (Nav) channel that directly mediates the depolarizing phase of action potentials in excitable membranes. Navs, also called VGSCs (voltage-gated sodium channels) or VDSCs (voltage-dependent sodium channels), operate by switching between closed and open conformations depending on the voltage difference across the membrane. In the open conformation they allow Na(+) ions to selectively pass through the pore, along their electrochemical gradient. The influx of Na+ ions provokes membrane depolarization, initiating the propagation of electrical signals throughout cells and tissues. The chain is Sodium channel protein type 4 subunit alpha B (scn4ab) from Takifugu rubripes (Japanese pufferfish).